The chain runs to 382 residues: Alcohol dehydrogenase 4 (382 aa).

Residues Asp40, Asn72, Gly99, Ser100, Thr139, Thr140, Thr148, Phe150, Lys161, and Gly183 each contribute to the NAD(+) site. Positions 195, 199, and 264 each coordinate Fe(2+). NAD(+) is bound by residues His268 and His278. His278 serves as a coordination point for Fe(2+).

It belongs to the iron-containing alcohol dehydrogenase family. In terms of assembly, homodimer. Zn(2+) serves as cofactor. Requires Fe(2+) as cofactor.

It localises to the mitochondrion. It catalyses the reaction a primary alcohol + NAD(+) = an aldehyde + NADH + H(+). The enzyme catalyses ethanol + NAD(+) = acetaldehyde + NADH + H(+). With respect to regulation, inhibited by EDTA. Functionally, alcohol dehydrogenase specific for ethanol. Acts mainyl as a mitochondrial formaldehyde dehydrogenase and has no effect on ethanol production. Shows drastically reduced activity towards primary alcohols from 4 carbon atoms upward. Isomers of aliphatic alcohol, as well as secondary alcohols and glycerol are not used at all. The role of ADH4 in yeast metabolism is not yet known, but ADH4 is not responsible for the production of ethanol during growth on glucose nor responsible for the oxidation of ethanol to acetaldehyde. The chain is Alcohol dehydrogenase 4 from Saccharomyces cerevisiae (strain ATCC 204508 / S288c) (Baker's yeast).